Here is a 545-residue protein sequence, read N- to C-terminus: Light-independent protochlorophyllide reductase subunit N (545 aa).

[4Fe-4S] cluster is bound by residues C102, C127, and C187.

It belongs to the BchN/ChlN family. Protochlorophyllide reductase is composed of three subunits; ChlL, ChlN and ChlB. Forms a heterotetramer of two ChlB and two ChlN subunits. [4Fe-4S] cluster is required as a cofactor.

It localises to the plastid. The protein localises to the chloroplast. The catalysed reaction is chlorophyllide a + oxidized 2[4Fe-4S]-[ferredoxin] + 2 ADP + 2 phosphate = protochlorophyllide a + reduced 2[4Fe-4S]-[ferredoxin] + 2 ATP + 2 H2O. It functions in the pathway porphyrin-containing compound metabolism; chlorophyll biosynthesis (light-independent). Functionally, component of the dark-operative protochlorophyllide reductase (DPOR) that uses Mg-ATP and reduced ferredoxin to reduce ring D of protochlorophyllide (Pchlide) to form chlorophyllide a (Chlide). This reaction is light-independent. The NB-protein (ChlN-ChlB) is the catalytic component of the complex. The polypeptide is Light-independent protochlorophyllide reductase subunit N (Chlamydomonas reinhardtii (Chlamydomonas smithii)).